A 708-amino-acid chain; its full sequence is Ion-translocating oxidoreductase complex subunit C (708 aa).

2 4Fe-4S ferredoxin-type domains span residues 369 to 397 (GEPQ…QQLY) and 407 to 436 (KATT…VQYF). 8 residues coordinate [4Fe-4S] cluster: Cys377, Cys380, Cys383, Cys387, Cys416, Cys419, Cys422, and Cys426. A disordered region spans residues 663–684 (KARKLEQQQTNAEPEEQVDPRK).

The protein belongs to the 4Fe4S bacterial-type ferredoxin family. RnfC subfamily. The complex is composed of six subunits: RsxA, RsxB, RsxC, RsxD, RsxE and RsxG. Requires [4Fe-4S] cluster as cofactor.

Its subcellular location is the cell inner membrane. In terms of biological role, part of a membrane-bound complex that couples electron transfer with translocation of ions across the membrane. Required to maintain the reduced state of SoxR. In Shigella boydii serotype 18 (strain CDC 3083-94 / BS512), this protein is Ion-translocating oxidoreductase complex subunit C.